The primary structure comprises 448 residues: uncharacterized protein (448 aa).

The residue at position 280 (Lys-280) is an N6-(pyridoxal phosphate)lysine.

Belongs to the class-III pyridoxal-phosphate-dependent aminotransferase family.

The protein resides in the cytoplasm. It is found in the mitochondrion. This is an uncharacterized protein from Schizosaccharomyces pombe (strain 972 / ATCC 24843) (Fission yeast).